The primary structure comprises 657 residues: Probable potassium transport system protein Kup 1 (657 aa).

12 consecutive transmembrane segments (helical) span residues 40–60 (VTSG…GDIG), 88–108 (VLSL…VLLL), 135–155 (WFLL…SMIT), 172–192 (PALE…LFAV), 198–218 (ALVA…IAVM), 241–261 (FLLS…LAVT), 282–302 (WMFF…ALVL), 320–340 (LVLP…QAVI), 380–400 (LLLI…NLAS), 402–422 (YGIA…VVIW), 432–452 (AAAV…ANLL), and 454–474 (LLEG…TIWT).

The protein belongs to the HAK/KUP transporter (TC 2.A.72) family.

It localises to the cell inner membrane. The catalysed reaction is K(+)(in) + H(+)(in) = K(+)(out) + H(+)(out). Its function is as follows. Transport of potassium into the cell. Likely operates as a K(+):H(+) symporter. This Bradyrhizobium diazoefficiens (strain JCM 10833 / BCRC 13528 / IAM 13628 / NBRC 14792 / USDA 110) protein is Probable potassium transport system protein Kup 1.